A 550-amino-acid chain; its full sequence is Hydroxylamine reductase (550 aa).

Residues Cys-3, Cys-6, Cys-18, and Cys-25 each contribute to the [2Fe-2S] cluster site. Residues His-249, Glu-273, Cys-317, Cys-405, Cys-433, Cys-458, Glu-492, and Lys-494 each coordinate hybrid [4Fe-2O-2S] cluster. Cys-405 bears the Cysteine persulfide mark.

This sequence belongs to the HCP family. Requires [2Fe-2S] cluster as cofactor. Hybrid [4Fe-2O-2S] cluster serves as cofactor.

The protein resides in the cytoplasm. It catalyses the reaction A + NH4(+) + H2O = hydroxylamine + AH2 + H(+). In terms of biological role, catalyzes the reduction of hydroxylamine to form NH(3) and H(2)O. The polypeptide is Hydroxylamine reductase (Escherichia coli (strain SMS-3-5 / SECEC)).